The sequence spans 223 residues: Probable GTP-binding protein EngB (223 aa).

The region spanning 49–223 (MGVEIAFAGR…LRAALAGLTD (175 aa)) is the EngB-type G domain. GTP contacts are provided by residues 57 to 64 (GRSNVGKS), 84 to 88 (GRTKQ), 102 to 105 (DMPG), 169 to 172 (TKAD), and 203 to 205 (TSS). 2 residues coordinate Mg(2+): serine 64 and threonine 86.

The protein belongs to the TRAFAC class TrmE-Era-EngA-EngB-Septin-like GTPase superfamily. EngB GTPase family. It depends on Mg(2+) as a cofactor.

Necessary for normal cell division and for the maintenance of normal septation. This Granulibacter bethesdensis (strain ATCC BAA-1260 / CGDNIH1) protein is Probable GTP-binding protein EngB.